The primary structure comprises 321 residues: GDP-L-fucose synthase (321 aa).

Position 14–20 (14–20 (GGSGLVG)) interacts with NADP(+). Tyrosine 143 acts as the Proton donor/acceptor in catalysis. NADP(+)-binding positions include lysine 147, 170-173 (PTNV), and histidine 186. The substrate site is built by lysine 194, tryptophan 208, arginine 215, and aspartate 277.

This sequence belongs to the NAD(P)-dependent epimerase/dehydratase family. Fucose synthase subfamily. Homodimer.

The enzyme catalyses GDP-beta-L-fucose + NADP(+) = GDP-4-dehydro-alpha-D-rhamnose + NADPH + H(+). It functions in the pathway nucleotide-sugar biosynthesis; GDP-L-fucose biosynthesis via de novo pathway; GDP-L-fucose from GDP-alpha-D-mannose: step 2/2. In terms of biological role, catalyzes the two-step NADP-dependent conversion of GDP-4-dehydro-6-deoxy-D-mannose to GDP-fucose, involving an epimerase and a reductase reaction. In Pongo abelii (Sumatran orangutan), this protein is GDP-L-fucose synthase (GFUS).